Consider the following 232-residue polypeptide: Ribose-5-phosphate isomerase A (232 aa).

Substrate-binding positions include 31 to 34 (TGST), 87 to 90 (DGAD), and 100 to 103 (KGGG). Glu-109 serves as the catalytic Proton acceptor. Lys-127 provides a ligand contact to substrate.

The protein belongs to the ribose 5-phosphate isomerase family. As to quaternary structure, homodimer.

It carries out the reaction aldehydo-D-ribose 5-phosphate = D-ribulose 5-phosphate. It functions in the pathway carbohydrate degradation; pentose phosphate pathway; D-ribose 5-phosphate from D-ribulose 5-phosphate (non-oxidative stage): step 1/1. Functionally, catalyzes the reversible conversion of ribose-5-phosphate to ribulose 5-phosphate. The chain is Ribose-5-phosphate isomerase A from Bifidobacterium longum subsp. infantis (strain ATCC 15697 / DSM 20088 / JCM 1222 / NCTC 11817 / S12).